Reading from the N-terminus, the 434-residue chain is Glutamyl-tRNA reductase (434 aa).

Substrate-binding positions include 52–55 (TCNR), S115, 120–122 (ETQ), and Q126. C53 (nucleophile) is an active-site residue. 195-200 (GAGEMI) serves as a coordination point for NADP(+).

This sequence belongs to the glutamyl-tRNA reductase family. As to quaternary structure, homodimer.

It carries out the reaction (S)-4-amino-5-oxopentanoate + tRNA(Glu) + NADP(+) = L-glutamyl-tRNA(Glu) + NADPH + H(+). The protein operates within porphyrin-containing compound metabolism; protoporphyrin-IX biosynthesis; 5-aminolevulinate from L-glutamyl-tRNA(Glu): step 1/2. Its function is as follows. Catalyzes the NADPH-dependent reduction of glutamyl-tRNA(Glu) to glutamate 1-semialdehyde (GSA). The protein is Glutamyl-tRNA reductase of Cupriavidus pinatubonensis (strain JMP 134 / LMG 1197) (Cupriavidus necator (strain JMP 134)).